The sequence spans 264 residues: Acyl-[acyl-carrier-protein]--UDP-N-acetylglucosamine O-acyltransferase (264 aa).

It belongs to the transferase hexapeptide repeat family. LpxA subfamily. In terms of assembly, homotrimer.

It localises to the cytoplasm. The enzyme catalyses a (3R)-hydroxyacyl-[ACP] + UDP-N-acetyl-alpha-D-glucosamine = a UDP-3-O-[(3R)-3-hydroxyacyl]-N-acetyl-alpha-D-glucosamine + holo-[ACP]. It participates in glycolipid biosynthesis; lipid IV(A) biosynthesis; lipid IV(A) from (3R)-3-hydroxytetradecanoyl-[acyl-carrier-protein] and UDP-N-acetyl-alpha-D-glucosamine: step 1/6. Involved in the biosynthesis of lipid A, a phosphorylated glycolipid that anchors the lipopolysaccharide to the outer membrane of the cell. The polypeptide is Acyl-[acyl-carrier-protein]--UDP-N-acetylglucosamine O-acyltransferase (Chlorobaculum parvum (strain DSM 263 / NCIMB 8327) (Chlorobium vibrioforme subsp. thiosulfatophilum)).